A 295-amino-acid chain; its full sequence is Ribosomal protein L11 methyltransferase (295 aa).

4 residues coordinate S-adenosyl-L-methionine: threonine 145, glycine 166, aspartate 188, and asparagine 230.

This sequence belongs to the methyltransferase superfamily. PrmA family.

Its subcellular location is the cytoplasm. The enzyme catalyses L-lysyl-[protein] + 3 S-adenosyl-L-methionine = N(6),N(6),N(6)-trimethyl-L-lysyl-[protein] + 3 S-adenosyl-L-homocysteine + 3 H(+). In terms of biological role, methylates ribosomal protein L11. The sequence is that of Ribosomal protein L11 methyltransferase from Haemophilus influenzae (strain PittEE).